The following is a 361-amino-acid chain: tRNA-specific 2-thiouridylase MnmA (361 aa).

Residues 11–18 (GMSGGVDS) and Met37 contribute to the ATP site. Residues 97 to 99 (NPD) are interaction with target base in tRNA. Cys102 serves as the catalytic Nucleophile. Cys102 and Cys199 are disulfide-bonded. Residue Gly126 participates in ATP binding. An interaction with tRNA region spans residues 149–151 (KDQ). The Cysteine persulfide intermediate role is filled by Cys199. The interval 311–312 (RY) is interaction with tRNA.

Belongs to the MnmA/TRMU family.

Its subcellular location is the cytoplasm. The enzyme catalyses S-sulfanyl-L-cysteinyl-[protein] + uridine(34) in tRNA + AH2 + ATP = 2-thiouridine(34) in tRNA + L-cysteinyl-[protein] + A + AMP + diphosphate + H(+). Its function is as follows. Catalyzes the 2-thiolation of uridine at the wobble position (U34) of tRNA, leading to the formation of s(2)U34. The chain is tRNA-specific 2-thiouridylase MnmA from Cupriavidus taiwanensis (strain DSM 17343 / BCRC 17206 / CCUG 44338 / CIP 107171 / LMG 19424 / R1) (Ralstonia taiwanensis (strain LMG 19424)).